The primary structure comprises 158 residues: Ribosome maturation factor RimP (158 aa).

The protein belongs to the RimP family.

Its subcellular location is the cytoplasm. Required for maturation of 30S ribosomal subunits. The sequence is that of Ribosome maturation factor RimP from Lactobacillus helveticus (strain DPC 4571).